The sequence spans 264 residues: S-adenosylmethionine decarboxylase proenzyme (264 aa).

Serine 113 (schiff-base intermediate with substrate; via pyruvic acid) is an active-site residue. Position 113 is a pyruvic acid (Ser); by autocatalysis (serine 113). Histidine 118 serves as the catalytic Proton acceptor; for processing activity. The Proton donor; for catalytic activity role is filled by cysteine 141.

This sequence belongs to the prokaryotic AdoMetDC family. Type 2 subfamily. In terms of assembly, heterooctamer of four alpha and four beta chains arranged as a tetramer of alpha/beta heterodimers. Pyruvate is required as a cofactor. Is synthesized initially as an inactive proenzyme. Formation of the active enzyme involves a self-maturation process in which the active site pyruvoyl group is generated from an internal serine residue via an autocatalytic post-translational modification. Two non-identical subunits are generated from the proenzyme in this reaction, and the pyruvate is formed at the N-terminus of the alpha chain, which is derived from the carboxyl end of the proenzyme. The post-translation cleavage follows an unusual pathway, termed non-hydrolytic serinolysis, in which the side chain hydroxyl group of the serine supplies its oxygen atom to form the C-terminus of the beta chain, while the remainder of the serine residue undergoes an oxidative deamination to produce ammonia and the pyruvoyl group blocking the N-terminus of the alpha chain.

It carries out the reaction S-adenosyl-L-methionine + H(+) = S-adenosyl 3-(methylsulfanyl)propylamine + CO2. The protein operates within amine and polyamine biosynthesis; S-adenosylmethioninamine biosynthesis; S-adenosylmethioninamine from S-adenosyl-L-methionine: step 1/1. In terms of biological role, catalyzes the decarboxylation of S-adenosylmethionine to S-adenosylmethioninamine (dcAdoMet), the propylamine donor required for the synthesis of the polyamines spermine and spermidine from the diamine putrescine. This is S-adenosylmethionine decarboxylase proenzyme from Stenotrophomonas maltophilia (strain R551-3).